The primary structure comprises 588 residues: Aspartate--tRNA ligase (588 aa).

Glutamate 177 provides a ligand contact to L-aspartate. Positions 201–204 (QIFK) are aspartate. Arginine 223 lines the L-aspartate pocket. ATP is bound by residues 223–225 (RDE) and glutamine 232. An L-aspartate-binding site is contributed by histidine 451. Glutamate 485 is a binding site for ATP. Arginine 492 provides a ligand contact to L-aspartate. 537-540 (GLDR) is an ATP binding site.

It belongs to the class-II aminoacyl-tRNA synthetase family. Type 1 subfamily. Homodimer.

The protein resides in the cytoplasm. It catalyses the reaction tRNA(Asp) + L-aspartate + ATP = L-aspartyl-tRNA(Asp) + AMP + diphosphate. Functionally, catalyzes the attachment of L-aspartate to tRNA(Asp) in a two-step reaction: L-aspartate is first activated by ATP to form Asp-AMP and then transferred to the acceptor end of tRNA(Asp). The polypeptide is Aspartate--tRNA ligase (Staphylococcus saprophyticus subsp. saprophyticus (strain ATCC 15305 / DSM 20229 / NCIMB 8711 / NCTC 7292 / S-41)).